Consider the following 75-residue polypeptide: RNA-binding protein KhpA (75 aa).

In terms of domain architecture, KH spans 29 to 75 (SIILELKVSPEDMGKVIGKQGRIAKAIRTVVKAAAIKENKKVVVEII).

It belongs to the KhpA RNA-binding protein family. In terms of assembly, forms a complex with KhpB.

Its subcellular location is the cytoplasm. A probable RNA chaperone. Forms a complex with KhpB which binds to cellular RNA and controls its expression. Plays a role in peptidoglycan (PG) homeostasis and cell length regulation. The sequence is that of RNA-binding protein KhpA from Clostridium perfringens (strain 13 / Type A).